The primary structure comprises 310 residues: E3 ubiquitin-protein ligase CSU1 (310 aa).

An RING-type 1; degenerate zinc finger spans residues 43–67 (CSLCLKPFIDPMCCHKGHVFCRECI). A coiled-coil region spans residues 75-95 (KKDIQRRLAAHSSQKKQDKDE). The disordered stretch occupies residues 110-138 (EFDQQNHSAMPRNSDKNHNEDKNGFHGAN). Residues 122–133 (NSDKNHNEDKNG) show a composition bias toward basic and acidic residues. The RING-type 2 zinc finger occupies 221–263 (CPSCKVTLTNTMSLVALSSCGHVFCKKCAEKFMPVDKVCLVCD).

Belongs to the NOSIP family.

The protein localises to the nucleus. The protein resides in the nucleus speckle. The enzyme catalyses S-ubiquitinyl-[E2 ubiquitin-conjugating enzyme]-L-cysteine + [acceptor protein]-L-lysine = [E2 ubiquitin-conjugating enzyme]-L-cysteine + N(6)-ubiquitinyl-[acceptor protein]-L-lysine.. The protein operates within protein modification; protein ubiquitination. Functionally, RING-finger E3 ubiquitin-protein ligase that plays an major role in maintaining COP1 homeostasis in darkness. Negatively regulates COP1 protein accumulation by targeting COP1 for ubiquitination and subsequent proteasomal degradation in dark-grown seedlings. Negatively regulates the accumulation of SPA1 protein in the dark. This chain is E3 ubiquitin-protein ligase CSU1, found in Arabidopsis thaliana (Mouse-ear cress).